The primary structure comprises 317 residues: Retinol dehydrogenase 16 (317 aa).

Residue 33–57 (FITGCDSGFGNLLARQLDRRGMRVL) participates in NAD(+) binding. A substrate-binding site is contributed by Ser-164. Tyr-176 (proton acceptor) is an active-site residue. Residues 289–308 (FFYLPMSYLPTFLVDALFYW) traverse the membrane as a helical segment.

The protein belongs to the short-chain dehydrogenases/reductases (SDR) family. In terms of assembly, homodimer. Not N-glycosylated. As to expression, liver &gt; kidney &gt; brain &gt; lung &gt; testis.

Its subcellular location is the microsome membrane. The protein resides in the endoplasmic reticulum membrane. It carries out the reaction all-trans-retinol--[retinol-binding protein] + NAD(+) = all-trans-retinal--[retinol-binding protein] + NADH + H(+). It catalyses the reaction all-trans-retinol + NAD(+) = all-trans-retinal + NADH + H(+). The catalysed reaction is 13-cis-retinol + NAD(+) = 13-cis-retinal + NADH + H(+). The enzyme catalyses 11-cis-retinol + NAD(+) = 11-cis-retinal + NADH + H(+). It carries out the reaction 9-cis-retinol + NAD(+) = 9-cis-retinal + NADH + H(+). It catalyses the reaction 5alpha-androstane-3alpha,17beta-diol + NAD(+) = 17beta-hydroxy-5alpha-androstan-3-one + NADH + H(+). The catalysed reaction is androsterone + NAD(+) = 5alpha-androstan-3,17-dione + NADH + H(+). The protein operates within cofactor metabolism; retinol metabolism. Oxidoreductase with a preference for NAD. Oxidizes all-trans-retinol, 9-cis-retinol, 11-cis-retinol and 13-cis-retinol to the corresponding aldehydes. Has higher activity towards CRBP-bound retinol than with free retinol. Oxidizes 3-alpha-hydroxysteroids. Oxidizes androstanediol and androsterone to dihydrotestosterone and androstanedione. Can also catalyze the reverse reaction. The sequence is that of Retinol dehydrogenase 16 from Rattus norvegicus (Rat).